An 82-amino-acid chain; its full sequence is Small ribosomal subunit protein bS18 (82 aa).

The disordered stretch occupies residues 1-25 (MTEMNQTAIRRPFHRRRKTCPFSGT).

It belongs to the bacterial ribosomal protein bS18 family. In terms of assembly, part of the 30S ribosomal subunit. Forms a tight heterodimer with protein bS6.

Its function is as follows. Binds as a heterodimer with protein bS6 to the central domain of the 16S rRNA, where it helps stabilize the platform of the 30S subunit. This Bartonella henselae (strain ATCC 49882 / DSM 28221 / CCUG 30454 / Houston 1) (Rochalimaea henselae) protein is Small ribosomal subunit protein bS18.